The chain runs to 185 residues: HTH-type transcriptional regulator Hpr (185 aa).

The HTH marR-type domain occupies 13-157; the sequence is AMIFSQRIAQ…LIAILRNIYG (145 aa). A DNA-binding region (H-T-H motif) is located at residues 63 to 86; that stretch reads ISEIAKFGVMHVSTAFNFSKKLEE.

In terms of assembly, homodimer.

Functionally, negative regulator of protease production and sporulation. The sequence is that of HTH-type transcriptional regulator Hpr from Bacillus anthracis (strain CDC 684 / NRRL 3495).